A 117-amino-acid polypeptide reads, in one-letter code: Virion membrane protein A21 (117 aa).

Residues 1 to 21 (MITLFLILCYFILIFNIIVPA) form a helical; Signal-anchor for type III membrane protein membrane-spanning segment. Over 22–117 (ISEKMRRERA…RAYSDLFFTT (96 aa)) the chain is Virion surface.

Belongs to the chordopoxvirinae A21 family. As to quaternary structure, envelope protein part of a stable entry-fusion complex (EFC) which is at least composed of proteins A16, A21, A28, G3, G9, H2, J5, and L5. Formation of the viral membrane is necessary for the assembly of the complex. Contains two intramolecular disulfide bonds. They are created by the viral disulfide bond formation pathway, a poxvirus-specific pathway that operates on the cytoplasmic side of the MV membranes.

The protein localises to the virion membrane. Envelope protein part of the entry-fusion complex responsible for the virus membrane fusion with host cell membrane during virus entry. The sequence is that of Virion membrane protein A21 from Vaccinia virus (strain Ankara) (VACV).